Reading from the N-terminus, the 480-residue chain is RAC-alpha serine/threonine-protein kinase (480 aa).

The region spanning 5–108 (AIVKEGWLHK…WATAIQTVAD (104 aa)) is the PH domain. Lys14 and Lys20 each carry N6-acetyllysine. 14–19 (KRGEYI) is a binding site for 1D-myo-inositol 1,3,4,5-tetrakisphosphate. Residues 23 to 25 (RPR) and Asn53 contribute to the 1D-myo-inositol 1,3,4,5-tetrakisphosphate site. Cys60 and Cys77 are oxidised to a cystine. Arg86 is a 1D-myo-inositol 1,3,4,5-tetrakisphosphate binding site. A disordered region spans residues 114–137 (EEETMDFRSGSPSDNSGAEEMEVS). Position 124 is a phosphoserine (Ser124). Phosphoserine; alternate occurs at positions 126 and 129. O-linked (GlcNAc) serine; alternate glycans are attached at residues Ser126 and Ser129. The Protein kinase domain maps to 150–408 (FEYLKLLGKG…AKEIMQHRFF (259 aa)). Position 156–164 (156–164 (LGKGTFGKV)) interacts with ATP. Position 176 is a phosphotyrosine; by TNK2 (Tyr176). An ATP-binding site is contributed by Lys179. Asp274 (proton acceptor) is an active-site residue. Lys284 participates in a covalent cross-link: Glycyl lysine isopeptide (Lys-Gly) (interchain with G-Cter in ubiquitin). An intrachain disulfide couples Cys296 to Cys310. Thr305 carries an O-linked (GlcNAc) threonine glycan. Residue Thr308 is modified to Phosphothreonine; by IKKE, PDPK1 and TBK1. Thr312 carries O-linked (GlcNAc) threonine glycosylation. The AGC-kinase C-terminal domain maps to 409–480 (ANIVWQDVYE…QFSYSASGTA (72 aa)). At Thr448 the chain carries Phosphothreonine. A Phosphothreonine; by MTOR modification is found at Thr450. The disordered stretch occupies residues 450–480 (TPPDQDDSMECVDSERRPHFPQFSYSASGTA). Residue Ser473 is glycosylated (O-linked (GlcNAc) serine; alternate). Position 473 is a phosphoserine; by IKKE, MTOR, PRKDC and TBK1; alternate (Ser473). Tyr474 is modified (phosphotyrosine). Phosphoserine; by CDK2 and MTOR is present on Ser477. The residue at position 479 (Thr479) is a Phosphothreonine; by CDK2 and MTOR.

This sequence belongs to the protein kinase superfamily. AGC Ser/Thr protein kinase family. RAC subfamily. As to quaternary structure, interacts with and phosphorylated by PDPK1. Interacts with AGAP2 (isoform 2/PIKE-A); the interaction occurs in the presence of guanine nucleotides. Interacts with AKTIP. Interacts (via PH domain) with MTCP1, TCL1A and TCL1B. Interacts with CDKN1B; the interaction phosphorylates CDKN1B promoting 14-3-3 binding and cell-cycle progression. Interacts with MAP3K5 and TRAF6. Interacts with BAD, PPP2R5B, STK3 and STK4. Interacts (via PH domain) with SIRT1. Interacts with SRPK2 in a phosphorylation-dependent manner. Interacts with TRIM13; the interaction ubiquitinates AKT1 leading to its proteasomal degradation. Interacts with RAF1. Interacts (via the C-terminus) with CCDC88A (via its C-terminus) and THEM4 (via its C-terminus). Interacts with GRB10; the interaction leads to GRB10 phosphorylation thus promoting YWHAE-binding. Interacts with KCTD20. Interacts with BTBD10. Interacts with PA2G4. Interacts with KIF14; the interaction is detected in the plasma membrane upon INS stimulation and promotes AKT1 phosphorylation. Interacts with FAM83B; activates the PI3K/AKT signaling cascade. Interacts with WDFY2 (via WD repeats 1-3). Forms a complex with WDFY2 and FOXO1. Interacts with FAM168A. Interacts with SYAP1 (via phosphorylated form and BSD domain); this interaction is enhanced in a mTORC2-mediated manner in response to epidermal growth factor (EGF) stimulation and activates AKT1. Interacts with PKHM3. Interacts with FKBP5/FKBP51; promoting interaction between Akt/AKT1 and PHLPP1, thereby enhancing dephosphorylation and subsequent activation of Akt/AKT1. Interacts with TMEM175; leading to formation of the lysoK(GF) complex. In terms of processing, O-GlcNAcylation at Thr-305 and Thr-312 inhibits activating phosphorylation at Thr-308 via disrupting the interaction between AKT1 and PDPK1. O-GlcNAcylation at Ser-473 also probably interferes with phosphorylation at this site. Post-translationally, phosphorylation on Thr-308, Ser-473 and Tyr-474 is required for full activity. Phosphorylation of the activation loop at Thr-308 by PDPK1/PDK1 is a prerequisite for full activation. Phosphorylation by mTORC2 in response to growth factors plays a key role in AKT1 activation: mTORC2 phosphorylates different sites depending on the context, such as Thr-450, Ser-473, Ser-477 or Thr-479, thereby facilitating subsequent phosphorylation of the activation loop by PDPK1/PDK1. Phosphorylation at Ser-473 by mTORC2 promotes ubiquitination and degradation by the proteasome. Also phosphorylated at Ser-477 and Thr-479 by CDK2, facilitating subsequent phosphorylation of the activation loop by PDPK1/PDK1. Activated TNK2 phosphorylates it on Tyr-176 resulting in its binding to the anionic plasma membrane phospholipid PA. This phosphorylated form localizes to the cell membrane, where it is targeted by PDPK1 and PDPK2 for further phosphorylations on Thr-308 and Ser-473 leading to its activation. Phosphorylated at Thr-308 and Ser-473 by IKBKE and TBK1. Ser-473 phosphorylation is enhanced by interaction with AGAP2 isoform 2 (PIKE-A). Ser-473 phosphorylation is enhanced by signaling through activated FLT3. Ser-473 is dephosphorylated by PHLPP. Dephosphorylated at Thr-308 and Ser-473 by PP2A phosphatase. The phosphorylated form of PPP2R5B is required for bridging AKT1 with PP2A phosphatase. Ser-473 is dephosphorylated by CPPED1, leading to termination of signaling. AIM2 acts as an inhibitor of AKT1 by inhibiting phosphorylation Ser-473: AIM2 acts both by inhibiting the activity of PRKDC/DNA-PK kinase and promoting dephosphorylation by PP2A phosphatase. Ubiquitinated; undergoes both 'Lys-48'- and 'Lys-63'-linked polyubiquitination. TRAF6-induced 'Lys-63'-linked AKT1 ubiquitination is critical for phosphorylation and activation. When ubiquitinated, it translocates to the plasma membrane, where it becomes phosphorylated. When fully phosphorylated and translocated into the nucleus, undergoes 'Lys-48'-polyubiquitination catalyzed by TTC3, leading to its degradation by the proteasome. Also ubiquitinated by TRIM13 leading to its proteasomal degradation. Ubiquitinated via 'Lys-48'-linked polyubiquitination by ZNRF1, leading to its degradation by the proteasome. Phosphorylated, undergoes 'Lys-48'-linked polyubiquitination preferentially at Lys-284 catalyzed by MUL1, leading to its proteasomal degradation. In terms of processing, acetylated on Lys-14 and Lys-20 by the histone acetyltransferases EP300 and KAT2B. Acetylation results in reduced phosphorylation and inhibition of activity. Deacetylated at Lys-14 and Lys-20 by SIRT1. SIRT1-mediated deacetylation relieves the inhibition. Post-translationally, cleavage by caspase-3/CASP3. Cleaved at the caspase-3 consensus site Asp-462 during apoptosis, resulting in down-regulation of the AKT signaling pathway and decreased cell survival. As to expression, widely expressed. Low levels found in liver with slightly higher levels present in thymus and testis.

The protein resides in the cytoplasm. It localises to the nucleus. Its subcellular location is the cell membrane. It is found in the mitochondrion intermembrane space. The enzyme catalyses L-seryl-[protein] + ATP = O-phospho-L-seryl-[protein] + ADP + H(+). It carries out the reaction L-threonyl-[protein] + ATP = O-phospho-L-threonyl-[protein] + ADP + H(+). Its activity is regulated as follows. Three specific sites, one in the kinase domain (Thr-308) and the two other ones in the C-terminal regulatory region (Ser-473 and Tyr-474), need to be phosphorylated for its full activation. Functionally, AKT1 is one of 3 closely related serine/threonine-protein kinases (AKT1, AKT2 and AKT3) called the AKT kinase, and which regulate many processes including metabolism, proliferation, cell survival, growth and angiogenesis. This is mediated through serine and/or threonine phosphorylation of a range of downstream substrates. Over 100 substrate candidates have been reported so far, but for most of them, no isoform specificity has been reported. AKT is responsible of the regulation of glucose uptake by mediating insulin-induced translocation of the SLC2A4/GLUT4 glucose transporter to the cell surface. Phosphorylation of PTPN1 at 'Ser-50' negatively modulates its phosphatase activity preventing dephosphorylation of the insulin receptor and the attenuation of insulin signaling. Phosphorylation of TBC1D4 triggers the binding of this effector to inhibitory 14-3-3 proteins, which is required for insulin-stimulated glucose transport. AKT also regulates the storage of glucose in the form of glycogen by phosphorylating GSK3A at 'Ser-21' and GSK3B at 'Ser-9', resulting in inhibition of its kinase activity. Phosphorylation of GSK3 isoforms by AKT is also thought to be one mechanism by which cell proliferation is driven. AKT also regulates cell survival via the phosphorylation of MAP3K5 (apoptosis signal-related kinase). Phosphorylation of 'Ser-83' decreases MAP3K5 kinase activity stimulated by oxidative stress and thereby prevents apoptosis. AKT mediates insulin-stimulated protein synthesis by phosphorylating TSC2 at 'Ser-939' and 'Thr-1462', thereby activating the mTORC1 signaling pathway, and leading to both phosphorylation of 4E-BP1 and in activation of RPS6KB1. Also regulates the mTORC1 signaling pathway by catalyzing phosphorylation of CASTOR1 and DEPDC5. AKT plays a role as key modulator of the AKT-mTOR signaling pathway controlling the tempo of the process of newborn neurons integration during adult neurogenesis, including correct neuron positioning, dendritic development and synapse formation. Part of a positive feedback loop of mTORC2 signaling by mediating phosphorylation of MAPKAP1/SIN1, promoting mTORC2 activation. AKT is involved in the phosphorylation of members of the FOXO factors (Forkhead family of transcription factors), leading to binding of 14-3-3 proteins and cytoplasmic localization. In particular, FOXO1 is phosphorylated at 'Thr-24', 'Ser-256' and 'Ser-319'. FOXO3 and FOXO4 are phosphorylated on equivalent sites. AKT has an important role in the regulation of NF-kappa-B-dependent gene transcription and positively regulates the activity of CREB1 (cyclic AMP (cAMP)-response element binding protein). The phosphorylation of CREB1 induces the binding of accessory proteins that are necessary for the transcription of pro-survival genes such as BCL2 and MCL1. AKT phosphorylates 'Ser-454' on ATP citrate lyase (ACLY), thereby potentially regulating ACLY activity and fatty acid synthesis. Activates the 3B isoform of cyclic nucleotide phosphodiesterase (PDE3B) via phosphorylation of 'Ser-273', resulting in reduced cyclic AMP levels and inhibition of lipolysis. Phosphorylates PIKFYVE on 'Ser-318', which results in increased PI(3)P-5 activity. The Rho GTPase-activating protein DLC1 is another substrate and its phosphorylation is implicated in the regulation cell proliferation and cell growth. Signals downstream of phosphatidylinositol 3-kinase (PI(3)K) to mediate the effects of various growth factors such as platelet-derived growth factor (PDGF), epidermal growth factor (EGF), insulin and insulin-like growth factor 1 (IGF1). AKT mediates the antiapoptotic effects of IGF1. Essential for the SPATA13-mediated regulation of cell migration and adhesion assembly and disassembly. May be involved in the regulation of the placental development. Phosphorylates STK4/MST1 at 'Thr-120' and 'Thr-387' leading to inhibition of its: kinase activity, nuclear translocation, autophosphorylation and ability to phosphorylate FOXO3. Phosphorylates STK3/MST2 at 'Thr-117' and 'Thr-384' leading to inhibition of its: cleavage, kinase activity, autophosphorylation at Thr-180, binding to RASSF1 and nuclear translocation. Phosphorylates SRPK2 and enhances its kinase activity towards SRSF2 and ACIN1 and promotes its nuclear translocation. Phosphorylates RAF1 at 'Ser-259' and negatively regulates its activity. Phosphorylation of BAD stimulates its pro-apoptotic activity. Phosphorylates KAT6A at 'Thr-369' and this phosphorylation inhibits the interaction of KAT6A with PML and negatively regulates its acetylation activity towards p53/TP53. Phosphorylates palladin (PALLD), modulating cytoskeletal organization and cell motility. Phosphorylates prohibitin (PHB), playing an important role in cell metabolism and proliferation. Phosphorylates CDKN1A, for which phosphorylation at 'Thr-145' induces its release from CDK2 and cytoplasmic relocalization. These recent findings indicate that the AKT1 isoform has a more specific role in cell motility and proliferation. Phosphorylates CLK2 thereby controlling cell survival to ionizing radiation. Phosphorylates PCK1 at 'Ser-90', reducing the binding affinity of PCK1 to oxaloacetate and changing PCK1 into an atypical protein kinase activity using GTP as donor. Also acts as an activator of TMEM175 potassium channel activity in response to growth factors: forms the lysoK(GF) complex together with TMEM175 and acts by promoting TMEM175 channel activation, independently of its protein kinase activity. Acts as a negative regulator of the cGAS-STING pathway by mediating phosphorylation of CGAS during mitosis, leading to its inhibition. Acts as a regulator of mitochondrial calcium uptake by mediating phosphorylation of MICU1 in the mitochondrial intermembrane space, impairing MICU1 maturation. Acts as an inhibitor of tRNA methylation by mediating phosphorylation of the N-terminus of METTL1, thereby inhibiting METTL1 methyltransferase activity. In response to LPAR1 receptor pathway activation, phosphorylates Rabin8/RAB3IP which alters its activity and phosphorylates WDR44 which induces WDR44 binding to Rab11, thereby switching Rab11 vesicular function from preciliary trafficking to endocytic recycling. This is RAC-alpha serine/threonine-protein kinase (Akt1) from Mus musculus (Mouse).